A 79-amino-acid polypeptide reads, in one-letter code: Putative antitoxin VapB1 (79 aa).

In terms of biological role, antitoxin component of a possible type II toxin-antitoxin (TA) system. The cognate toxin is VapC1. This Mycobacterium tuberculosis (strain ATCC 25618 / H37Rv) protein is Putative antitoxin VapB1 (vapB1).